A 393-amino-acid polypeptide reads, in one-letter code: Probable alpha-1,6-mannosyltransferase MNN10 (393 aa).

Topologically, residues 1 to 52 (MSSVPYNSQLPISNHLEYDEDEKKSRGSKLGLKYKMIYWRKTLCSSLARWRK) are cytoplasmic. Residues 53–73 (LILLISLALFLFIWISDSTIS) traverse the membrane as a helical; Signal-anchor for type II membrane protein segment. Over 74–393 (RNPSTTSFQG…RKWYTRFFFP (320 aa)) the chain is Lumenal. Residues 77–97 (STTSFQGQNSNDNKLSNTGSS) are disordered.

It belongs to the glycosyltransferase 34 family. As to quaternary structure, component of the M-Pol II complex composed of ANP1, MNN9, MNN10, MNN11 and HOC1.

The protein resides in the endoplasmic reticulum membrane. It localises to the golgi apparatus. The protein localises to the cis-Golgi network membrane. Its function is as follows. Required for polarized growth and efficient budding. The M-Pol II complex possesses alpha-1,6-mannosyltransferase activity and is probably involved in the elongation of the mannan backbone of N-linked glycans on cell wall and periplasmic proteins. The chain is Probable alpha-1,6-mannosyltransferase MNN10 (MNN10) from Saccharomyces cerevisiae (strain ATCC 204508 / S288c) (Baker's yeast).